Here is a 1077-residue protein sequence, read N- to C-terminus: Ubiquitin carboxyl-terminal hydrolase 28 (1077 aa).

The disordered stretch occupies residues 60 to 80; it reads DERVKEPSQDTVATEPSEVEG. Serine 67 is subject to Phosphoserine. A UIM domain is found at 97-116; sequence DNKDDLQAAIALSLLESPKI. Lysine 99 is covalently cross-linked (Glycyl lysine isopeptide (Lys-Gly) (interchain with G-Cter in SUMO2)). The 489-residue stretch at 162 to 650 folds into the USP domain; sequence VGLKNVGNTC…SAYCLMYIND (489 aa). Cysteine 171 serves as the catalytic Nucleophile. Serine 375 carries the phosphoserine modification. Residues 477–535 form a disordered region; the sequence is HCSVSDQTSKESTSTESSSQDVESTFSSPEDSLPKSKPLTSSRSSMEMPSQPAPRTVTD. A compositionally biased stretch (low complexity) spans 481–501; it reads SDQTSKESTSTESSSQDVEST. A compositionally biased stretch (polar residues) spans 514-524; that stretch reads PLTSSRSSMEM. At serine 550 the chain carries Phosphoserine. Histidine 600 functions as the Proton acceptor in the catalytic mechanism. Positions 697–728 are disordered; the sequence is EEQSCKIPQMESSTNSSSQDYSTSQEPSVASS. Over residues 707–724 the composition is skewed to low complexity; the sequence is ESSTNSSSQDYSTSQEPS. Position 714 is a phosphoserine (serine 714). A Glycyl lysine isopeptide (Lys-Gly) (interchain with G-Cter in SUMO2) cross-link involves residue lysine 759. Threonine 1048 bears the Phosphothreonine mark.

The protein belongs to the peptidase C19 family. USP28 subfamily. Interacts with ZNF304. Interacts with PRKD1. Interacts with TP53BP1. Interacts with isoform 1 of FBXW7; following DNA damage, dissociates from FBXW7 leading to degradation of MYC. Post-translationally, degraded upon nickel ion level or hypoxia exposure. Phosphorylated upon DNA damage at Ser-67 and Ser-714, by ATM or ATR. Phosphorylated by PRKD1.

It localises to the nucleus. It is found in the nucleoplasm. It carries out the reaction Thiol-dependent hydrolysis of ester, thioester, amide, peptide and isopeptide bonds formed by the C-terminal Gly of ubiquitin (a 76-residue protein attached to proteins as an intracellular targeting signal).. Its function is as follows. Deubiquitinase involved in DNA damage response checkpoint and MYC proto-oncogene stability. Involved in DNA damage induced apoptosis by specifically deubiquitinating proteins of the DNA damage pathway such as CLSPN. Also involved in G2 DNA damage checkpoint, by deubiquitinating CLSPN, and preventing its degradation by the anaphase promoting complex/cyclosome (APC/C). In contrast, it does not deubiquitinate PLK1. Specifically deubiquitinates MYC in the nucleoplasm, leading to prevent MYC degradation by the proteasome: acts by specifically interacting with isoform 1 of FBXW7 (FBW7alpha) in the nucleoplasm and counteracting ubiquitination of MYC by the SCF(FBW7) complex. In contrast, it does not interact with isoform 4 of FBXW7 (FBW7gamma) in the nucleolus, allowing MYC degradation and explaining the selective MYC degradation in the nucleolus. Deubiquitinates ZNF304, hence preventing ZNF304 degradation by the proteasome and leading to the activated KRAS-mediated promoter hypermethylation and transcriptional silencing of tumor suppressor genes (TSGs) in a subset of colorectal cancers (CRC) cells. This chain is Ubiquitin carboxyl-terminal hydrolase 28 (USP28), found in Homo sapiens (Human).